Consider the following 56-residue polypeptide: Large ribosomal subunit protein bL32 (56 aa).

Basic residues predominate over residues 1-20 (MAVPKRRTSRSNTRSRRAQW). The interval 1–26 (MAVPKRRTSRSNTRSRRAQWKAKAPA) is disordered.

It belongs to the bacterial ribosomal protein bL32 family.

The sequence is that of Large ribosomal subunit protein bL32 from Parafrankia sp. (strain EAN1pec).